The sequence spans 241 residues: DNA repair protein RecO (241 aa).

Belongs to the RecO family.

In terms of biological role, involved in DNA repair and RecF pathway recombination. In Azobacteroides pseudotrichonymphae genomovar. CFP2, this protein is DNA repair protein RecO.